The primary structure comprises 220 residues: 2-dehydro-3-deoxy-phosphogluconate aldolase (220 aa).

Glu-48 acts as the Proton acceptor in catalysis. Pyruvate contacts are provided by Arg-52, Thr-76, and Lys-136. The active-site Schiff-base intermediate with substrate is Lys-136.

The protein belongs to the KHG/KDPG aldolase family. Homotrimer.

The catalysed reaction is 2-dehydro-3-deoxy-6-phospho-D-gluconate = D-glyceraldehyde 3-phosphate + pyruvate. It functions in the pathway carbohydrate acid metabolism; 2-dehydro-3-deoxy-D-gluconate degradation; D-glyceraldehyde 3-phosphate and pyruvate from 2-dehydro-3-deoxy-D-gluconate: step 2/2. Functionally, involved in the degradation of glucose via the Entner-Doudoroff pathway. Catalyzes the reversible, stereospecific retro-aldol cleavage of 2-keto-3-deoxy-6-phosphogluconate (KDPG) to pyruvate and D-glyceraldehyde-3-phosphate. The sequence is that of 2-dehydro-3-deoxy-phosphogluconate aldolase (eda) from Pseudomonas aeruginosa (strain ATCC 15692 / DSM 22644 / CIP 104116 / JCM 14847 / LMG 12228 / 1C / PRS 101 / PAO1).